Consider the following 262-residue polypeptide: Large ribosomal subunit protein uL5c (262 aa).

A chloroplast-targeting transit peptide spans 1 to 39 (MASPSLLQSSASSFHGRFSPLAAPSSARMLSPPLRNVVK).

This sequence belongs to the universal ribosomal protein uL5 family. In terms of assembly, part of the 50S ribosomal subunit; contacts the 5S rRNA.

The protein localises to the plastid. Its subcellular location is the chloroplast. Its function is as follows. Binds 5S rRNA, forms part of the central protuberance of the 50S subunit. In Arabidopsis thaliana (Mouse-ear cress), this protein is Large ribosomal subunit protein uL5c (RPL5).